The chain runs to 206 residues: Large ribosomal subunit protein eL8 (206 aa).

Belongs to the eukaryotic ribosomal protein eL8 family. In terms of assembly, component of the large ribosomal subunit.

The protein resides in the cytoplasm. This Encephalitozoon cuniculi (strain GB-M1) (Microsporidian parasite) protein is Large ribosomal subunit protein eL8 (RPL7A).